The primary structure comprises 238 residues: Envelope glycoprotein G (238 aa).

The signal sequence occupies residues 1 to 24; the sequence is MSQGAMRAVVPIIPFLLVLVGVSG. Residues 25-189 lie on the Virion surface side of the membrane; it reads VPTNVSSTTQ…SFLTASPALD (165 aa). 2 N-linked (GlcNAc...) asparagine; by host glycosylation sites follow: N28 and N49. Polar residues-rich tracts occupy residues 28-42 and 49-68; these read NVSS…TTGR and NMTQ…TTPD. The disordered stretch occupies residues 28-171; it reads NVSSTTQPQL…LTSKGRPLVP (144 aa). The segment covering 78–88 has biased composition (acidic residues); that stretch reads LEEEEEEEGAG. Residues 89 to 100 are compositionally biased toward basic and acidic residues; that stretch reads DGEHLEGGDGTR. A helical transmembrane segment spans residues 190-210; it reads TLFVVSTVIHTLSFLCIGAMA. Over 211–238 the chain is Intravirion; it reads THLCGGWSRRGRRTHPSVRYVCLPSERG.

The protein belongs to the alphaherpesvirinae glycoprotein G family.

It is found in the virion membrane. Its function is as follows. Chemokine-binding protein that inhibits neutrophils' chemotaxis. The protein is Envelope glycoprotein G (gG) of Human herpesvirus 1 (strain 17) (HHV-1).